The following is a 409-amino-acid chain: Phosphatidylglycerol--prolipoprotein diacylglyceryl transferase (409 aa).

A run of 4 helical transmembrane segments spans residues 18-38 (PVPL…AVFV), 48-68 (MDPM…IVGA), 93-113 (IWNG…GAWL), and 119-139 (GISL…AQAI). Position 141 (R141) interacts with a 1,2-diacyl-sn-glycero-3-phospho-(1'-sn-glycerol). 2 helical membrane passes run 177 to 197 (QPTF…LLVV) and 234 to 254 (ILGL…ALLA). A disordered region spans residues 273 to 409 (ALGIARSRPA…AVPPEEPQLP (137 aa)). Composition is skewed to low complexity over residues 297 to 309 (AAAP…DSAA), 320 to 335 (PDLG…SAGS), and 348 to 375 (TATT…TATT).

It belongs to the Lgt family.

The protein resides in the cell membrane. The catalysed reaction is L-cysteinyl-[prolipoprotein] + a 1,2-diacyl-sn-glycero-3-phospho-(1'-sn-glycerol) = an S-1,2-diacyl-sn-glyceryl-L-cysteinyl-[prolipoprotein] + sn-glycerol 1-phosphate + H(+). The protein operates within protein modification; lipoprotein biosynthesis (diacylglyceryl transfer). Its function is as follows. Catalyzes the transfer of the diacylglyceryl group from phosphatidylglycerol to the sulfhydryl group of the N-terminal cysteine of a prolipoprotein, the first step in the formation of mature lipoproteins. In Frankia casuarinae (strain DSM 45818 / CECT 9043 / HFP020203 / CcI3), this protein is Phosphatidylglycerol--prolipoprotein diacylglyceryl transferase.